The chain runs to 366 residues: Methyltransferase calH (366 aa).

Residues threonine 189, aspartate 216, and 245–246 contribute to the S-adenosyl-L-methionine site; that span reads NA.

Belongs to the class I-like SAM-binding methyltransferase superfamily.

It participates in secondary metabolite biosynthesis. In terms of biological role, methyltransferase; part of the gene cluster that mediates the biosynthesis of calbistrin A and related compounds. Calbistrin A is a secondary metabolite with an interesting structure that was recently found to have bioactivity against leukemia cells. It consists of two polyketides linked by an ester bond: a bicyclic decalin containing polyketide and a linear 12 carbon dioic acid structure. The polyketide synthase calA is probably responsible for forming the decalin moiety. Because calA lacks a designated enoylreductase (ER) domain, the required activity is provided by the trans-enoyl reductase calK. Following release from the PKS, calF then probably catalyzes the oxidation and the subsequent Diels Alder cycloisomerization that lead to the formation of the decalin moiety. The decalin polyketide backbone includes two C-methyl groups, at C7 and C11 in backbone, of which the C7 position is probably methylated by the methyltransferase domain of calA. A candidate for adding the methyl group at C11, if not done by CalA, is the cluster methyltransferase calH. Several additional tailoring enzymes within the cluster could be involved in the modification of the decalin polyketide product. Those include the 3 cytochrome P450 monooxygenases CalE, CalG and CalL, of which one might be responsible for the introduction of the extra hydroxyl group attached to the backbone of the decalin moiety, at position C9 in the backbone, that allows for attachment of the linear moiety. One tailoring enzyme activity that is expected to be involved in biosynthesis of calbistrin is an acyltransferase for connecting the two polyketide synthase products, and which could be performed by the cluster acyltransferase calJ. The enzyme responsible for the biosynthesis of the linear moiety, probably a second PKS, has not been identified yet. The protein is Methyltransferase calH of Penicillium decumbens.